The sequence spans 304 residues: tRNA pseudouridine synthase B (304 aa).

D44 serves as the catalytic Nucleophile.

This sequence belongs to the pseudouridine synthase TruB family. Type 1 subfamily.

The catalysed reaction is uridine(55) in tRNA = pseudouridine(55) in tRNA. Its function is as follows. Responsible for synthesis of pseudouridine from uracil-55 in the psi GC loop of transfer RNAs. This is tRNA pseudouridine synthase B from Novosphingobium aromaticivorans (strain ATCC 700278 / DSM 12444 / CCUG 56034 / CIP 105152 / NBRC 16084 / F199).